We begin with the raw amino-acid sequence, 53 residues long: Large ribosomal subunit protein eL40 (53 aa).

It belongs to the eukaryotic ribosomal protein eL40 family.

This chain is Large ribosomal subunit protein eL40, found in Staphylothermus marinus (strain ATCC 43588 / DSM 3639 / JCM 9404 / F1).